Consider the following 199-residue polypeptide: dITP/XTP pyrophosphatase (199 aa).

Residue 7–12 (TGNAGK) participates in substrate binding. Aspartate 68 serves as the catalytic Proton acceptor. A Mg(2+)-binding site is contributed by aspartate 68. Substrate-binding positions include serine 69, 153 to 156 (FGYD), lysine 176, and 181 to 182 (HR).

This sequence belongs to the HAM1 NTPase family. Homodimer. Mg(2+) serves as cofactor.

The catalysed reaction is XTP + H2O = XMP + diphosphate + H(+). It carries out the reaction dITP + H2O = dIMP + diphosphate + H(+). The enzyme catalyses ITP + H2O = IMP + diphosphate + H(+). Its function is as follows. Pyrophosphatase that catalyzes the hydrolysis of nucleoside triphosphates to their monophosphate derivatives, with a high preference for the non-canonical purine nucleotides XTP (xanthosine triphosphate), dITP (deoxyinosine triphosphate) and ITP. Seems to function as a house-cleaning enzyme that removes non-canonical purine nucleotides from the nucleotide pool, thus preventing their incorporation into DNA/RNA and avoiding chromosomal lesions. The polypeptide is dITP/XTP pyrophosphatase (Halorhodospira halophila (strain DSM 244 / SL1) (Ectothiorhodospira halophila (strain DSM 244 / SL1))).